Reading from the N-terminus, the 217-residue chain is Ras-related protein Rab-39A (217 aa).

6 residues coordinate GTP: S17, G20, K21, S22, C23, and T44. Mg(2+) is bound at residue S22. Residues 39–47 (PACDPTVGV) are switch-I. Mg(2+) contacts are provided by T44 and D68. Residues G71, H127, K128, D130, A158, and K159 each contribute to the GTP site. A switch-II region spans residues 71–87 (GQERFRSITRSYYRNSV). S-geranylgeranyl cysteine attachment occurs at residues C215 and C217. Position 217 is a cysteine methyl ester (C217).

The protein belongs to the small GTPase superfamily. Rab family. In terms of assembly, interacts (GDP-bound) with C9orf72; C9orf72 acts as a GEF for RAB39A. Interacts (GTP-bound) with HOPS complex components VPS39 and VPS41, and STX17; interaction between HOPS components and RAB39A contributes to obtaining a functional HOPS complex that promotes membrane fusion driven by STX17-SNAP29-VAMP8. Interacts with BECN1. Probably associates with the PI3K (PI3KC3/PI3K-III/class III phosphatidylinositol 3-kinase) complex. Interacts with UACA. Interacts with isoform a of RASSF1. Does not interact with isoform c of RASSF1. The cofactor is Mg(2+). Prenylated. Prenylation is required for association with cellular membranes.

It is found in the cell membrane. Its subcellular location is the cytoplasmic vesicle. It localises to the phagosome membrane. The protein localises to the late endosome membrane. The protein resides in the lysosome membrane. It is found in the autolysosome membrane. It catalyses the reaction GTP + H2O = GDP + phosphate + H(+). Its activity is regulated as follows. Regulated by guanine nucleotide exchange factors (GEFs) including c9Orf72, which promote the exchange of bound GDP for free GTP. Regulated by GTPase activating proteins (GAPs) which increase the GTP hydrolysis activity. Inhibited by GDP dissociation inhibitors (GDIs). Its function is as follows. The small GTPases Rab are key regulators of intracellular membrane trafficking, from the formation of transport vesicles to their fusion with membranes. Rabs cycle between an inactive GDP-bound form and an active GTP-bound form that is able to recruit to membranes different sets of downstream effectors directly responsible for vesicle formation, movement, tethering and fusion. RAB39A regulates autophagosome-lysosome fusion via recruitment of the HOPS endosomal tethering complex onto lysosomes; this process involves lysosomal RAB39A and autophagosomal RAB2A recruitment of HOPS subcomplexes VPS41-VPS16-VPS18-VPS33A and VPS39-VPS11, respectively, which assemble into a functional complex to mediate membrane tethering and SNAREs-driven membrane fusion. Also negatively regulates lipopolysaccharide (LPS)-induced autophagosome formation in macrophages, possibly by implicating PI3K. Promotes the delivery of MHC-I molecules from the ER to phagosomes and the generation of peptide-loaded MHC-I complexes in phagosomes, thus enhancing antigen cross-presentation by dendritic cells. Plays a role in the maturation and acidification of phagosomes that engulf pathogens, such as S.aureus and M.tuberculosis. Plays a role in the fusion of phagosomes with lysosomes. May be involved in multiple neurite formation. In Mus musculus (Mouse), this protein is Ras-related protein Rab-39A.